Reading from the N-terminus, the 45-residue chain is MAPPTREYRCTPNYHSARHQMSSLLGLCKGGVGPQPRPWCEKTMV.

This is an uncharacterized protein from Lolium latent virus (isolate Lolium/USA/US1/-) (LoLV).